A 488-amino-acid polypeptide reads, in one-letter code: 3-octaprenyl-4-hydroxybenzoate carboxy-lyase (488 aa).

Asparagine 172 contacts Mn(2+). Prenylated FMN contacts are provided by residues 175–177 (IYR), 189–191 (RWL), and 194–195 (RG). Glutamate 238 contributes to the Mn(2+) binding site. The Proton donor role is filled by aspartate 287.

The protein belongs to the UbiD family. Homohexamer. Prenylated FMN serves as cofactor. The cofactor is Mn(2+).

It localises to the cell membrane. It catalyses the reaction a 4-hydroxy-3-(all-trans-polyprenyl)benzoate + H(+) = a 2-(all-trans-polyprenyl)phenol + CO2. It functions in the pathway cofactor biosynthesis; ubiquinone biosynthesis. In terms of biological role, catalyzes the decarboxylation of 3-octaprenyl-4-hydroxy benzoate to 2-octaprenylphenol, an intermediate step in ubiquinone biosynthesis. This chain is 3-octaprenyl-4-hydroxybenzoate carboxy-lyase, found in Shewanella oneidensis (strain ATCC 700550 / JCM 31522 / CIP 106686 / LMG 19005 / NCIMB 14063 / MR-1).